Consider the following 286-residue polypeptide: Deaminated glutathione amidase (286 aa).

Residues 4–252 form the CN hydrolase domain; sequence ANVALLQLCS…VSALKVKIET (249 aa). The active-site Proton acceptor is the glutamate 42. Lysine 115 is a catalytic residue. Cysteine 157 serves as the catalytic Nucleophile.

It belongs to the carbon-nitrogen hydrolase superfamily. NIT1/NIT2 family.

It catalyses the reaction N-(4-oxoglutaryl)-L-cysteinylglycine + H2O = L-cysteinylglycine + 2-oxoglutarate. Functionally, hydrolyzes deaminated glutathione (dGSH, 2-oxoglutaramate) to alpha-ketoglutarate (alpha-KG) and cysteinylglycine (specific activity 6.50 umol/min/mg), has less activity against alpha-ketoglutaramate (a-KGM, specific activity 0.20 umol/min/mg), very little activity on glutathione and none on L-glutamine. May function as a metabolite repair enzyme. The polypeptide is Deaminated glutathione amidase (Yersinia enterocolitica).